The following is a 512-amino-acid chain: Serine--tRNA ligase, cytoplasmic (512 aa).

M1 carries the post-translational modification N-acetylmethionine. Residues 9–61 (RVDKGGDPALIRETQEKRFKDPGLVDQLVKADSEWRRCRFRADNLNKLKNLCS) form an interaction with tRNA region. A Phosphoserine modification is found at S241. L-serine-binding residues include T271 and R302. Residues 302–304 (RQE) and 318–321 (VHQF) each bind ATP. Residue K323 is modified to N6-acetyllysine. E325 is an L-serine binding site. 391 to 394 (ELVS) contributes to the ATP binding site. L-serine is bound at residue N427. The interval 470–512 (FVKPAPIDQEPSKKQKKQHEGSKKKAKEVPLENQLQSMEVTEA) is disordered. The span at 479–499 (EPSKKQKKQHEGSKKKAKEVP) shows a compositional bias: basic and acidic residues. The short motif at 482–494 (KKQKKQHEGSKKK) is the Nuclear localization signal element. Residues 502 to 512 (NQLQSMEVTEA) are compositionally biased toward polar residues. Residue S506 is modified to Phosphoserine.

The protein belongs to the class-II aminoacyl-tRNA synthetase family. Type-1 seryl-tRNA synthetase subfamily. In terms of assembly, homodimer. The tRNA molecule may bind across the dimer. Interacts with SIRT2. Interacts with METTL6; interaction is required for the tRNA N(3)-methylcytidine methyltransferase activity of METTL6.

The protein localises to the cytoplasm. It localises to the nucleus. It carries out the reaction tRNA(Ser) + L-serine + ATP = L-seryl-tRNA(Ser) + AMP + diphosphate + H(+). The catalysed reaction is tRNA(Sec) + L-serine + ATP = L-seryl-tRNA(Sec) + AMP + diphosphate + H(+). The protein operates within aminoacyl-tRNA biosynthesis; selenocysteinyl-tRNA(Sec) biosynthesis; L-seryl-tRNA(Sec) from L-serine and tRNA(Sec): step 1/1. Catalyzes the attachment of serine to tRNA(Ser) in a two-step reaction: serine is first activated by ATP to form Ser-AMP and then transferred to the acceptor end of tRNA(Ser). Is probably also able to aminoacylate tRNA(Sec) with serine, to form the misacylated tRNA L-seryl-tRNA(Sec), which will be further converted into selenocysteinyl-tRNA(Sec). In the nucleus, binds to the VEGFA core promoter and prevents MYC binding and transcriptional activation by MYC. Recruits SIRT2 to the VEGFA promoter, promoting deacetylation of histone H4 at 'Lys-16' (H4K16). Thereby, inhibits the production of VEGFA and sprouting angiogenesis mediated by VEGFA. This chain is Serine--tRNA ligase, cytoplasmic (Sars1), found in Mus musculus (Mouse).